A 202-amino-acid chain; its full sequence is Putative transmembrane protein ORF202 (202 aa).

A run of 5 helical transmembrane segments spans residues 13–33, 40–60, 87–107, 156–176, and 177–197; these read AIAFGLAYSILEVNVPLFHYI, VFYLIIFAIANMTLPLSLFLG, YYPVIDGIPIADVIEVIISVF, YGALTLVLVSVLAILSSHSLS, and LTAFATLSLIVGTGIFVDLWA.

Its subcellular location is the host membrane. This chain is Putative transmembrane protein ORF202, found in Acidianus filamentous virus 2 (isolate Italy/Pozzuoli) (AFV-2).